Reading from the N-terminus, the 113-residue chain is MFSKLEAIIRPFKLEEVKVRLMTFGVPGITVTNVMGCGKQIGGIERSKGVEYDSELIEKVKIEIVVMNEHIDELIEIIINAVWTGEIGDGKIFVSPVSSVIRIRTQDKDLDAI.

Residue Tyr-52 is modified to O-UMP-tyrosine.

It belongs to the P(II) protein family. In terms of assembly, homotrimer.

Its subcellular location is the plastid. It localises to the chloroplast. P-II indirectly controls the transcription of the glutamine synthetase gene (glnA). P-II prevents NR-II-catalyzed conversion of NR-I to NR-I-phosphate, the transcriptional activator of glnA. When P-II is uridylylated to P-II-UMP, these events are reversed. When the ratio of Gln to 2-ketoglutarate decreases, P-II is uridylylated to P-II-UMP, which causes the deadenylation of glutamine synthetase, so activating the enzyme. In Cyanidium caldarium (Red alga), this protein is Nitrogen regulatory protein P-II (glnB).